The primary structure comprises 2422 residues: Interferon-induced very large GTPase 1 (2422 aa).

A disordered region spans residues 945-965 (ENFFEDSDSPTKSSSTEPSPH). Residues 954-963 (PTKSSSTEPS) show a composition bias toward low complexity. Residues 1479–1720 (DKRLFVLSIL…KISDVKSRVQ (242 aa)) form the VLIG-type G domain. Residues 1489–1496 (GLQSSGKS), 1542–1545 (DTEG), and 1619–1622 (TATD) each bind GTP.

This sequence belongs to the TRAFAC class dynamin-like GTPase superfamily. Very large inducible GTPase (VLIG) family.

The protein resides in the cytoplasm. The protein localises to the cytosol. Its subcellular location is the nucleus. The polypeptide is Interferon-induced very large GTPase 1 (GVINP1) (Homo sapiens (Human)).